The primary structure comprises 141 residues: Hemoglobin subunit alpha-A/A' (141 aa).

The region spanning 1–141 (VLSANDKTNV…VGNVLTAKYR (141 aa)) is the Globin domain. O2 is bound at residue His-58. Position 87 (His-87) interacts with heme b.

The protein belongs to the globin family. In terms of assembly, heterotetramer of two alpha chains and two beta chains. As to expression, red blood cells.

Involved in oxygen transport from the lung to the various peripheral tissues. This Gyps rueppelli (Rueppell's griffon) protein is Hemoglobin subunit alpha-A/A' (HBAA).